The following is a 237-amino-acid chain: Uracil-DNA glycosylase (237 aa).

Asp-77 serves as the catalytic Proton acceptor.

The protein belongs to the uracil-DNA glycosylase (UDG) superfamily. UNG family.

It is found in the cytoplasm. The catalysed reaction is Hydrolyzes single-stranded DNA or mismatched double-stranded DNA and polynucleotides, releasing free uracil.. Excises uracil residues from the DNA which can arise as a result of misincorporation of dUMP residues by DNA polymerase or due to deamination of cytosine. This chain is Uracil-DNA glycosylase, found in Acinetobacter baylyi (strain ATCC 33305 / BD413 / ADP1).